The sequence spans 678 residues: NADPH--cytochrome P450 reductase (678 aa).

The residue at position 2 (glycine 2) is an N-acetylglycine. The Lumenal portion of the chain corresponds to 2-21; it reads GDSHVDTGATSTEAVAEEVS. The helical transmembrane segment at 22 to 42 threads the bilayer; sequence LFSMTDMILLSVLVGFLTYFF. Residues 43–678 are Cytoplasmic-facing; sequence LFRKKKEEIP…KGRYSLDVWS (636 aa). Residue serine 63 is modified to Phosphoserine. The 145-residue stretch at 80–224 folds into the Flavodoxin-like domain; the sequence is IIVFYGSQTG…DFITWREQFW (145 aa). FMN is bound by residues 86 to 91, 138 to 141, 173 to 182, and aspartate 208; these read SQTGTA, ATYG, and LGNKTYEHFN. Residues 279–521 enclose the FAD-binding FR-type domain; that stretch reads KNPFLAAVTT…FVRKSQFRLP (243 aa). Arginine 298 contributes to the NADP(+) binding site. Residues arginine 424, 454–457, 472–474, tyrosine 478, and 488–491 each bind FAD; these read RYYS, CAV, and GVAT. Residues threonine 535, 596-597, 602-606, and aspartate 639 contribute to the NADP(+) site; these read SR and KVYVQ. Position 677 (tryptophan 677) interacts with FAD.

The protein belongs to the NADPH--cytochrome P450 reductase family. It in the N-terminal section; belongs to the flavodoxin family. In the C-terminal section; belongs to the flavoprotein pyridine nucleotide cytochrome reductase family. FAD serves as cofactor. The cofactor is FMN.

The protein localises to the endoplasmic reticulum membrane. It carries out the reaction 2 oxidized [cytochrome P450] + NADPH = 2 reduced [cytochrome P450] + NADP(+) + H(+). Functionally, this enzyme is required for electron transfer from NADP to cytochrome P450 in microsomes. It can also provide electron transfer to heme oxygenase and cytochrome B5. In Cavia porcellus (Guinea pig), this protein is NADPH--cytochrome P450 reductase.